The primary structure comprises 544 residues: Sphingosine-1-phosphate lyase (544 aa).

Topologically, residues 1 to 29 are lumenal; sequence MDSFSYSSMKSMLIQARGSLNSRLSEFEP. The chain crosses the membrane as a helical; Signal-anchor for type III membrane protein span at residues 30-50; sequence LVLLLVPLVSLFLAQIIGSVF. Residues 51-544 are Cytoplasmic-facing; the sequence is GVVHEKGLKA…LLVSFMDSQY (494 aa). The residue at position 349 (K349) is an N6-(pyridoxal phosphate)lysine.

The protein belongs to the group II decarboxylase family. Sphingosine-1-phosphate lyase subfamily. Requires pyridoxal 5'-phosphate as cofactor. Expressed in the peripheral parts of leaves and the bases of trichomes.

It localises to the endoplasmic reticulum membrane. It carries out the reaction sphinganine 1-phosphate = hexadecanal + phosphoethanolamine. Its pathway is lipid metabolism; sphingolipid metabolism. Its function is as follows. Cleaves phosphorylated sphingoid bases (PSBs), such as sphingosine-1-phosphate, into fatty aldehydes and phosphoethanolamine. May play a minor role in maintenance of sphingolipid metabolism during normal plant development and growth, but be required for maintaining sphingoid long chain bases (LCB) and their phosphorylated derivatives (LCB-P) levels when sphingolipid metabolism is perturbed. May play a role in dehydration stress. The sequence is that of Sphingosine-1-phosphate lyase (DPL1) from Arabidopsis thaliana (Mouse-ear cress).